Reading from the N-terminus, the 89-residue chain is Small ribosomal subunit protein uS15 (89 aa).

It belongs to the universal ribosomal protein uS15 family. Part of the 30S ribosomal subunit. Forms a bridge to the 50S subunit in the 70S ribosome, contacting the 23S rRNA.

One of the primary rRNA binding proteins, it binds directly to 16S rRNA where it helps nucleate assembly of the platform of the 30S subunit by binding and bridging several RNA helices of the 16S rRNA. Its function is as follows. Forms an intersubunit bridge (bridge B4) with the 23S rRNA of the 50S subunit in the ribosome. The protein is Small ribosomal subunit protein uS15 of Synechococcus elongatus (strain ATCC 33912 / PCC 7942 / FACHB-805) (Anacystis nidulans R2).